The following is a 349-amino-acid chain: S-adenosylmethionine:tRNA ribosyltransferase-isomerase (349 aa).

It belongs to the QueA family. As to quaternary structure, monomer.

It localises to the cytoplasm. It catalyses the reaction 7-aminomethyl-7-carbaguanosine(34) in tRNA + S-adenosyl-L-methionine = epoxyqueuosine(34) in tRNA + adenine + L-methionine + 2 H(+). The protein operates within tRNA modification; tRNA-queuosine biosynthesis. In terms of biological role, transfers and isomerizes the ribose moiety from AdoMet to the 7-aminomethyl group of 7-deazaguanine (preQ1-tRNA) to give epoxyqueuosine (oQ-tRNA). In Ruegeria pomeroyi (strain ATCC 700808 / DSM 15171 / DSS-3) (Silicibacter pomeroyi), this protein is S-adenosylmethionine:tRNA ribosyltransferase-isomerase.